The chain runs to 267 residues: 4,5-DOPA dioxygenase extradiol (267 aa).

Residues His-9, His-47, His-168, and His-222 each coordinate Zn(2+).

The protein belongs to the DODA-type extradiol aromatic ring-opening dioxygenase family. Requires Zn(2+) as cofactor. Fe(2+) serves as cofactor. Expressed in petals. Not detected in leaves, stems and roots.

It is found in the cytoplasm. The enzyme catalyses L-dopa + O2 = 4-(L-alanin-3-yl)-2-hydroxy-cis,cis-muconate 6-semialdehyde + H(+). The protein operates within pigment biosynthesis; betalain biosynthesis. Functionally, opens the cyclic ring of dihydroxy-phenylalanine (DOPA) between carbons 4 and 5, thus producing an unstable seco-DOPA that rearranges nonenzymatically to betalamic acid. Produces mainly (S)-betalamic acid. Required for the coloration of flowers. The chain is 4,5-DOPA dioxygenase extradiol (DOD) from Mirabilis jalapa (Garden four-o'clock).